Reading from the N-terminus, the 219-residue chain is Uracil-DNA glycosylase (219 aa).

Asp-61 (proton acceptor) is an active-site residue.

This sequence belongs to the uracil-DNA glycosylase (UDG) superfamily. UNG family.

The protein resides in the cytoplasm. It carries out the reaction Hydrolyzes single-stranded DNA or mismatched double-stranded DNA and polynucleotides, releasing free uracil.. Its function is as follows. Excises uracil residues from the DNA which can arise as a result of misincorporation of dUMP residues by DNA polymerase or due to deamination of cytosine. The polypeptide is Uracil-DNA glycosylase (Neisseria meningitidis serogroup C (strain 053442)).